The sequence spans 481 residues: Glutamate mutase epsilon subunit (481 aa).

An L-glutamate-binding site is contributed by arginine 67. Glycine 69 contacts adenosylcob(III)alamin. Position 99 (arginine 99) interacts with L-glutamate. Asparagine 122 contacts adenosylcob(III)alamin. Residues 148–149 (RH), glutamate 170, and tyrosine 176 contribute to the L-glutamate site. Residue proline 179 participates in adenosylcob(III)alamin binding. Residue tyrosine 180 participates in L-glutamate binding. Residues phenylalanine 296, lysine 325, glutamate 329, and isoleucine 333 each contribute to the adenosylcob(III)alamin site.

Belongs to the methylaspartate mutase GlmE subunit family. In terms of assembly, heterotetramer composed of 2 epsilon subunits (GlmE) and 2 sigma subunits (GlmS). GlmE exists as a homodimer and GlmS as a monomer. Adenosylcob(III)alamin is required as a cofactor.

The enzyme catalyses (2S,3S)-3-methyl-L-aspartate = L-glutamate. The protein operates within amino-acid degradation; L-glutamate degradation via mesaconate pathway; acetate and pyruvate from L-glutamate: step 1/4. Functionally, catalyzes the carbon skeleton rearrangement of L-glutamate to L-threo-3-methylaspartate ((2S,3S)-3-methylaspartate). The sequence is that of Glutamate mutase epsilon subunit from Yersinia enterocolitica serotype O:8 / biotype 1B (strain NCTC 13174 / 8081).